We begin with the raw amino-acid sequence, 608 residues long: Afamin (608 aa).

The first 21 residues, 1-21, serve as a signal peptide directing secretion; that stretch reads MRHLKLTGFIFFLLSLTESLA. Albumin domains lie at 22 to 210, 211 to 403, and 404 to 599; these read LPTK…APIT, QYLK…KFNE, and TTER…KTGD. The N-linked (GlcNAc...) asparagine glycan is linked to asparagine 33. 10 disulfide bridges follow: cysteine 77/cysteine 86, cysteine 99/cysteine 114, cysteine 113/cysteine 124, cysteine 148/cysteine 193, cysteine 224/cysteine 270, cysteine 269/cysteine 277, cysteine 289/cysteine 303, cysteine 302/cysteine 313, cysteine 340/cysteine 385, and cysteine 384/cysteine 393. N-linked (GlcNAc...) asparagine glycosylation is present at asparagine 109. N-linked (GlcNAc...) asparagine glycosylation is present at asparagine 153. The tract at residues 215 to 319 is binding pocket for hydrophobic ligands; that stretch reads ALSSYQRNVC…RADCIINANK (105 aa). Asparagine 402 is a glycosylation site (N-linked (GlcNAc...) asparagine). 5 disulfide bridges follow: cysteine 416/cysteine 462, cysteine 461/cysteine 470, cysteine 483/cysteine 499, cysteine 498/cysteine 509, and cysteine 580/cysteine 589. A glycan (N-linked (GlcNAc...) asparagine) is linked at asparagine 488. The tract at residues 585–608 is disordered; it reads KPEACFSPESSKTGDVSQDAEKQR.

The protein belongs to the ALB/AFP/VDB family. Forms a 1:1 complex with Wnt family members; interacts with WNT1, WNT2B, WNT3, WNT3A, WNT5A, WNT7A, WNT7B, WNT8, WNT9A, WNT9B, WNT10A and WNT10B. In terms of processing, N-glycosylated; more than 90% of the glycans are sialylated.

It is found in the secreted. Functionally, functions as a carrier for hydrophobic molecules in body fluids. Essential for the solubility and activity of lipidated Wnt family members, including WNT1, WNT2B, WNT3, WNT3A, WNT5A, WNT7A, WNT7B, WNT8, WNT9A, WNT9B, WNT10A and WNT10B. Binds vitamin E. May transport vitamin E in body fluids under conditions where the lipoprotein system is not sufficient. May be involved in the transport of vitamin E across the blood-brain barrier. The protein is Afamin (Afm) of Rattus norvegicus (Rat).